Consider the following 219-residue polypeptide: 7-cyano-7-deazaguanine synthase (219 aa).

Residue 10-20 (FSGGQDSTTCL) participates in ATP binding. Cys-187, Cys-196, Cys-199, and Cys-202 together coordinate Zn(2+).

This sequence belongs to the QueC family. As to quaternary structure, homodimer. Requires Zn(2+) as cofactor.

The enzyme catalyses 7-carboxy-7-deazaguanine + NH4(+) + ATP = 7-cyano-7-deazaguanine + ADP + phosphate + H2O + H(+). It functions in the pathway purine metabolism; 7-cyano-7-deazaguanine biosynthesis. Its function is as follows. Catalyzes the ATP-dependent conversion of 7-carboxy-7-deazaguanine (CDG) to 7-cyano-7-deazaguanine (preQ(0)). In Lysinibacillus sphaericus (strain C3-41), this protein is 7-cyano-7-deazaguanine synthase.